We begin with the raw amino-acid sequence, 324 residues long: Probable non-intrinsic ABC protein 5 (324 aa).

The region spanning 2-111 is the ABC transporter domain; it reads DRERYDKVIE…ADLTLVMKDG (110 aa). 2 consecutive transmembrane segments (helical) span residues 212–232 and 259–279; these read YITL…QILF and LSTL…CILV. The ABC transmembrane type-1 domain maps to 222 to 324; sequence VPFILLGQIL…TCSKTCIYSS (103 aa).

Belongs to the ABC transporter superfamily.

The protein resides in the membrane. This chain is Probable non-intrinsic ABC protein 5 (NAP5), found in Arabidopsis thaliana (Mouse-ear cress).